The primary structure comprises 5101 residues: Malformin synthetase mlfA (5101 aa).

The tract at residues 225–616 is adenylation 1; it reads ERHAANRPHS…CGRADTQVKL (392 aa). The region spanning 757–830 is the Carrier 1 domain; the sequence is SRLEQKIQLA…EAASLAEVQE (74 aa). O-(pantetheine 4'-phosphoryl)serine is present on S791. Residues 868–1299 form a condensation 1 region; the sequence is EDVFPCTTMQ…ALNTLSLLQA (432 aa). Residues 1327–1716 are adenylation 2; the sequence is DRWVTRQPEG…GRKDTQVKLR (390 aa). Positions 1854–1931 constitute a Carrier 2 domain; the sequence is TPTLELERTL…QLAAEVGEPA (78 aa). Position 1891 is an O-(pantetheine 4'-phosphoryl)serine (S1891). Disordered stretches follow at residues 1932–1961 and 1994–2020; these read GQSASSASSTTEEGFTFSTPDDSSTNDGVD and GGSSSNKTPSVSSSSSSSSSSKRKKNA. 2 stretches are compositionally biased toward low complexity: residues 1934 to 1958 and 1996 to 2013; these read SASSASSTTEEGFTFSTPDDSSTND and SSSNKTPSVSSSSSSSSS. The interval 2066–2481 is condensation 2; that stretch reads EDIYPATALQ…AVSCSDKETL (416 aa). The tract at residues 2504–2896 is adenylation 3; that stretch reads RRTPHAPAVC…IGRRDGQLKL (393 aa). Residues 3032–3108 enclose the Carrier 3 domain; the sequence is RPVTSQEHEM…QLICHLNTIR (77 aa). The residue at position 3069 (S3069) is an O-(pantetheine 4'-phosphoryl)serine. 2 condensation regions span residues 3125–3590 and 3611–4030; these read WVAL…TYDQ and NIYP…EHLV. Residues 4055-4445 form an adenylation 4 region; it reads HNSRQAVCAW…VGRKDNQIKF (391 aa). In terms of domain architecture, Carrier 4 spans 4579 to 4655; that stretch reads MPSTAAERKM…DLSDQAKSLI (77 aa). S4616 carries the post-translational modification O-(pantetheine 4'-phosphoryl)serine. A condensation 5 region spans residues 4712–5097; it reads IVVDIPGPID…KIVGLLRHPE (386 aa).

Belongs to the NRP synthetase family.

The protein operates within secondary metabolite biosynthesis. Functionally, nonribosomal peptide synthetase; part of the gene cluster that mediates the biosynthesis of malformins, cyclic pentapeptides with a disulfide bond between 2 consecutive cysteins, that show potential anti-tumor as well as antimalarial and antitrypanosomal properties. The nonribosomal peptide synthetase mlfA is responsible of the formation of the cyclic pentapeptide. The malformin biosynthesis clusters in malformin-producing fungi also contain enzymes involved in the formation of the disulfide bond between the two consecutive cysteins within malformins, in addition to additional tailoring enzymes such as methyltransferases or oxidoreductases. They are also composed of up to 4 major facilitator superfamily transporters, and transcription factors probably involved in the regulation of the expression of those clusters. This is Malformin synthetase mlfA from Aspergillus kawachii (strain NBRC 4308) (White koji mold).